Here is a 166-residue protein sequence, read N- to C-terminus: MFPMVTEFMNYGQQTVRAARYIGQGFMITLSHANRLPVTIQYPYEKLIISERFRGRIHFEFDKCIACEVCVRVCPIDLPVVDWKLETDIRKKRLLNYSIDFGICIFCGNCVEYCPTNCLSMTEEYELSTYDRHELNYNQIALGRLPMSIIDDYTIRTILNLPEIKT.

4Fe-4S ferredoxin-type domains follow at residues Gly55–Lys84 and Leu95–Glu124. Positions 64, 67, 70, 74, 104, 107, 110, and 114 each coordinate [4Fe-4S] cluster.

Belongs to the complex I 23 kDa subunit family. NDH is composed of at least 16 different subunits, 5 of which are encoded in the nucleus. [4Fe-4S] cluster is required as a cofactor.

Its subcellular location is the plastid. The protein localises to the chloroplast thylakoid membrane. It carries out the reaction a plastoquinone + NADH + (n+1) H(+)(in) = a plastoquinol + NAD(+) + n H(+)(out). The enzyme catalyses a plastoquinone + NADPH + (n+1) H(+)(in) = a plastoquinol + NADP(+) + n H(+)(out). Functionally, NDH shuttles electrons from NAD(P)H:plastoquinone, via FMN and iron-sulfur (Fe-S) centers, to quinones in the photosynthetic chain and possibly in a chloroplast respiratory chain. The immediate electron acceptor for the enzyme in this species is believed to be plastoquinone. Couples the redox reaction to proton translocation, and thus conserves the redox energy in a proton gradient. In Chamaechaenactis scaposa (Fullstem), this protein is NAD(P)H-quinone oxidoreductase subunit I, chloroplastic.